We begin with the raw amino-acid sequence, 626 residues long: Phosphoenolpyruvate carboxykinase (ATP) 2 (626 aa).

2 disordered regions span residues 1–23 and 64–86; these read MASP…APVN and PNLV…KHQQ. 324 to 331 is a binding site for ATP; the sequence is GLSGTGKT.

Belongs to the phosphoenolpyruvate carboxykinase (ATP) family. Homohexamer.

Its subcellular location is the cytoplasm. It catalyses the reaction oxaloacetate + ATP = phosphoenolpyruvate + ADP + CO2. It participates in carbohydrate biosynthesis; gluconeogenesis. This Urochloa panicoides (Panic liverseed grass) protein is Phosphoenolpyruvate carboxykinase (ATP) 2 (PCK2).